The following is a 613-amino-acid chain: Transcription factor Sp2 (613 aa).

The segment at 1–32 (MSDPQTSMAATAAVSPSDYLQPAASTTQDSQP) is disordered. Positions 23–32 (AASTTQDSQP) are enriched in polar residues. Ser-78 carries the post-translational modification Phosphoserine. Over residues 225–235 (TGAPTQLLTES) the composition is skewed to polar residues. The segment at 225-258 (TGAPTQLLTESPPTPLSKTNKKARKKSLPASQPP) is disordered. The 9aaTAD; inactive signature appears at 361-369 (GEVQTVLVQ). Positions 372–389 (PPATAAATSNTTCSSPAS) are enriched in low complexity. Positions 372 to 404 (PPATAAATSNTTCSSPASRAPHLSGTSKKHSAA) are disordered. 3 consecutive C2H2-type zinc fingers follow at residues 525–549 (HVCHIPDCGKTFRKTSLLRAHVRLH), 555–579 (FVCNWFFCGKRFTRSDELQRHARTH), and 585–607 (FECAQCQKRFMRSDHLTKHYKTH).

The protein belongs to the Sp1 C2H2-type zinc-finger protein family.

It is found in the nucleus. Functionally, binds to GC box promoters elements and selectively activates mRNA synthesis from genes that contain functional recognition sites. The polypeptide is Transcription factor Sp2 (SP2) (Homo sapiens (Human)).